The chain runs to 234 residues: Large ribosomal subunit protein uL1 (234 aa).

The protein belongs to the universal ribosomal protein uL1 family. In terms of assembly, part of the 50S ribosomal subunit.

Binds directly to 23S rRNA. The L1 stalk is quite mobile in the ribosome, and is involved in E site tRNA release. Functionally, protein L1 is also a translational repressor protein, it controls the translation of the L11 operon by binding to its mRNA. The protein is Large ribosomal subunit protein uL1 of Salmonella arizonae (strain ATCC BAA-731 / CDC346-86 / RSK2980).